Consider the following 151-residue polypeptide: Large ribosomal subunit protein uL15 (151 aa).

Basic residues predominate over residues 1–14 (MRREKKSRAYRGSR). A disordered region spans residues 1–33 (MRREKKSRAYRGSRTHGWGRVGQHRKSGSRGGR).

This sequence belongs to the universal ribosomal protein uL15 family. Part of the 50S ribosomal subunit.

Its function is as follows. Binds to the 23S rRNA. The chain is Large ribosomal subunit protein uL15 from Thermofilum pendens (strain DSM 2475 / Hrk 5).